The sequence spans 226 residues: Small ribosomal subunit protein uS3 (226 aa).

The region spanning 36–104 (IRKYLENRLS…KIQINIFEIK (69 aa)) is the KH type-2 domain.

It belongs to the universal ribosomal protein uS3 family. In terms of assembly, part of the 30S ribosomal subunit. Forms a tight complex with proteins S10 and S14.

Its function is as follows. Binds the lower part of the 30S subunit head. Binds mRNA in the 70S ribosome, positioning it for translation. The chain is Small ribosomal subunit protein uS3 from Karelsulcia muelleri (strain GWSS) (Sulcia muelleri).